Reading from the N-terminus, the 284-residue chain is Large ribosomal subunit protein uL2 (284 aa).

Residues 232 to 284 (RGTAMNPVDHPHGGGEGRHNGYIPRTPWGKVTKGLKTRDKRKSNKWIVKDRRK) are disordered. A compositionally biased stretch (basic and acidic residues) spans 240-250 (DHPHGGGEGRH). Over residues 264–284 (KGLKTRDKRKSNKWIVKDRRK) the composition is skewed to basic residues.

The protein belongs to the universal ribosomal protein uL2 family. In terms of assembly, part of the 50S ribosomal subunit. Forms a bridge to the 30S subunit in the 70S ribosome.

Functionally, one of the primary rRNA binding proteins. Required for association of the 30S and 50S subunits to form the 70S ribosome, for tRNA binding and peptide bond formation. It has been suggested to have peptidyltransferase activity; this is somewhat controversial. Makes several contacts with the 16S rRNA in the 70S ribosome. The protein is Large ribosomal subunit protein uL2 of Chlamydia abortus (strain DSM 27085 / S26/3) (Chlamydophila abortus).